We begin with the raw amino-acid sequence, 311 residues long: Porphobilinogen deaminase (311 aa).

Cysteine 245 bears the S-(dipyrrolylmethanemethyl)cysteine mark.

It belongs to the HMBS family. In terms of assembly, monomer. It depends on dipyrromethane as a cofactor.

It carries out the reaction 4 porphobilinogen + H2O = hydroxymethylbilane + 4 NH4(+). Its pathway is porphyrin-containing compound metabolism; protoporphyrin-IX biosynthesis; coproporphyrinogen-III from 5-aminolevulinate: step 2/4. Tetrapolymerization of the monopyrrole PBG into the hydroxymethylbilane pre-uroporphyrinogen in several discrete steps. This chain is Porphobilinogen deaminase, found in Acinetobacter baylyi (strain ATCC 33305 / BD413 / ADP1).